Consider the following 511-residue polypeptide: Lysine--tRNA ligase (511 aa).

Mg(2+)-binding residues include Glu403 and Glu410.

This sequence belongs to the class-II aminoacyl-tRNA synthetase family. Homodimer. It depends on Mg(2+) as a cofactor.

The protein resides in the cytoplasm. It catalyses the reaction tRNA(Lys) + L-lysine + ATP = L-lysyl-tRNA(Lys) + AMP + diphosphate. The sequence is that of Lysine--tRNA ligase from Onion yellows phytoplasma (strain OY-M).